The sequence spans 1343 residues: DNA-directed RNA polymerase subunit beta (1343 aa).

It belongs to the RNA polymerase beta chain family. The RNAP catalytic core consists of 2 alpha, 1 beta, 1 beta' and 1 omega subunit. When a sigma factor is associated with the core the holoenzyme is formed, which can initiate transcription.

The catalysed reaction is RNA(n) + a ribonucleoside 5'-triphosphate = RNA(n+1) + diphosphate. Functionally, DNA-dependent RNA polymerase catalyzes the transcription of DNA into RNA using the four ribonucleoside triphosphates as substrates. The sequence is that of DNA-directed RNA polymerase subunit beta from Shewanella violacea.